A 218-amino-acid chain; its full sequence is Ohanin-like protein (218 aa).

The signal sequence occupies residues 1–40 (MSPSAGFQFSLYFLQTKKVLWKLTGLCYILLFTLCFFADQ). The propeptide occupies 41–48 (ENGGKALA). The B30.2/SPRY domain occupies 49 to 155 (SPPGIWKRAD…RIWQTGLWWL (107 aa)). Residues 156 to 218 (RHLETDPGRV…LGGTVSLTTL (63 aa)) constitute a propeptide that is removed on maturation.

This sequence belongs to the ohanin/vespryn family. In terms of tissue distribution, expressed by the venom gland.

The protein resides in the secreted. Neurotoxin that produces dose-dependent hypolocomotion and hyperalgesia in mice. May directly act on the central nervous system, as it is 6500-fold more potent when administered intracerebroventricularly than intraperitoneal. This chain is Ohanin-like protein, found in Lachesis muta muta (Bushmaster).